The sequence spans 392 residues: Putative transactivator/viroplasmin protein (392 aa).

The stretch at 1-88 forms a coiled coil; the sequence is MEDMMKQILE…NVEEQYQWKN (88 aa). A disordered region spans residues 358–392; sequence EIEKEEPGEEKNLEDVSTDDNNEKKKIRSVIVKET.

This sequence belongs to the caulimoviridae viroplasmin family.

Its subcellular location is the host cytoplasm. Enhances the translation of downstream ORFs on polycistronic mRNAs derived from cassava vein mosaic virus. This chain is Putative transactivator/viroplasmin protein, found in Cassava vein mosaic virus (CsVMV).